We begin with the raw amino-acid sequence, 264 residues long: DNA repair protein RecO (264 aa).

It belongs to the RecO family.

In terms of biological role, involved in DNA repair and RecF pathway recombination. The sequence is that of DNA repair protein RecO from Chlorobium luteolum (strain DSM 273 / BCRC 81028 / 2530) (Pelodictyon luteolum).